Consider the following 497-residue polypeptide: Guanosine-5'-triphosphate,3'-diphosphate pyrophosphatase (497 aa).

It belongs to the GppA/Ppx family. GppA subfamily.

It catalyses the reaction guanosine 3'-diphosphate 5'-triphosphate + H2O = guanosine 3',5'-bis(diphosphate) + phosphate + H(+). It participates in purine metabolism; ppGpp biosynthesis; ppGpp from GTP: step 2/2. In terms of biological role, catalyzes the conversion of pppGpp to ppGpp. Guanosine pentaphosphate (pppGpp) is a cytoplasmic signaling molecule which together with ppGpp controls the 'stringent response', an adaptive process that allows bacteria to respond to amino acid starvation, resulting in the coordinated regulation of numerous cellular activities. In Vibrio vulnificus (strain YJ016), this protein is Guanosine-5'-triphosphate,3'-diphosphate pyrophosphatase.